The sequence spans 419 residues: Tyrosine--tRNA ligase (419 aa).

Position 42 (tyrosine 42) interacts with L-tyrosine. Positions 47-56 (CTAPSLHVGS) match the 'HIGH' region motif. L-tyrosine-binding residues include tyrosine 179 and glutamine 183. A 'KMSKS' region motif is present at residues 239–243 (KMGKT). Lysine 242 lines the ATP pocket. Residues 353–419 (LGVLAAFVKA…RKRHVLLKLV (67 aa)) form the S4 RNA-binding domain.

It belongs to the class-I aminoacyl-tRNA synthetase family. TyrS type 1 subfamily. Homodimer.

It is found in the cytoplasm. The catalysed reaction is tRNA(Tyr) + L-tyrosine + ATP = L-tyrosyl-tRNA(Tyr) + AMP + diphosphate + H(+). Catalyzes the attachment of tyrosine to tRNA(Tyr) in a two-step reaction: tyrosine is first activated by ATP to form Tyr-AMP and then transferred to the acceptor end of tRNA(Tyr). This Methylocella silvestris (strain DSM 15510 / CIP 108128 / LMG 27833 / NCIMB 13906 / BL2) protein is Tyrosine--tRNA ligase.